The following is a 416-amino-acid chain: MCTTISFAEPEIVLGHGRRVLFVNPDDLQIFKEIELPPDLGLKCHETQSQESCPATATSTTAGKEPGGKEQQLAKQPEEGGTSASGSVATSTSVQNVAYSPDGQLLAVTTSGGQKALLLYRSRPENARLLSARPLARAASAVRFCSDSSSVLVTDKTGDCYQYDCVEVEAPPRLLLGHLSVVYDILWSEDQQHIITCDRDDKIRVTNYPATFDIHSYCLGHREFVSGLALLTEQHIASASGDKTLRVWNYIQGKELLQHELPAPAVRLLVRQLEPEKVFQAAVLFYEHVDALGLYRLERSSDDTWSVTATQLVCAEAGSWSISNFTLTSDRIYITGAENERLSLRVYDIATGQPTTNGVPEGWLKMVLDGLGANEEGAPPFIPEDLSVWFKKRFDNVTDYLERKKRRIEEQKQQKC.

Positions 47 to 88 (TQSQESCPATATSTTAGKEPGGKEQQLAKQPEEGGTSASGSV) are disordered. Positions 49-62 (SQESCPATATSTTA) are enriched in polar residues. 4 WD repeats span residues 89–130 (ATST…ARLL), 177–216 (GHLSVVYDILWSEDQQHIITCDRDDKIRVTNYPATFDIHS), 220–258 (GHREFVSGLALLTEQHIASASGDKTLRVWNYIQGKELLQ), and 317–357 (AGSW…PTTN).

The protein belongs to the WD repeat TRM82 family. As to quaternary structure, forms a heterodimer with the catalytic subunit Mettl1. Interacts with mei-P26 and weakly interacts with bgcn; required for the function or formation of the mei-P26-bgcn-bam-sxl complex. Interacts with nanos; may be involved in mei-P26-dependent derepression of the BMP signaling pathway. Interacts with Myc; the interaction may be mediated by mei-P26 and may be involved in the regulation of ribosome biogenesis. In terms of tissue distribution, in testis, it is present at high level in hub cells, a niche for germline stem cells of testis. Ubiquitously expressed in all testicular cells throughout spermatogenesis. Ubiquitously expressed in all germline and somatic cells of the ovary.

It is found in the nucleus. It localises to the cytoplasm. Its pathway is tRNA modification; N(7)-methylguanine-tRNA biosynthesis. Its function is as follows. Required for the Mettl1-dependent formation of N(7)-methylguanine at position 46 (m7G46) in tRNA. In the Mettl1-wuho methyltransferase complex, it is required to stabilize and induce conformational changes of the catalytic subunit. Required for binding of nanos mRNA and repression of translation by the mei-P26-bgcn-bam-sxl complex. May cooperate with mei-P26 and nanos to derepress the BMP signaling pathway. May cooperate with mei-P26 to suppress expression of a subset of microRNAs. May cooperate with mei-P26 to regulate bam expression levels in germline cells during gametogenesis. Required to promote mitosis to meiosis transition during gametogenesis. May regulate germline cell division in part by regulating ribosome biogenesis. The polypeptide is tRNA (guanine-N(7)-)-methyltransferase non-catalytic subunit wuho (Drosophila erecta (Fruit fly)).